Consider the following 506-residue polypeptide: AMP phosphorylase (506 aa).

AMP-binding positions include Gly-168, 194–199 (SRAITG), and Thr-203. The active-site Proton donor is the Asp-256. The AMP site is built by Ser-264 and Lys-288.

This sequence belongs to the thymidine/pyrimidine-nucleoside phosphorylase family. Type 2 subfamily.

The enzyme catalyses AMP + phosphate = alpha-D-ribose 1,5-bisphosphate + adenine. It carries out the reaction CMP + phosphate = cytosine + alpha-D-ribose 1,5-bisphosphate. It catalyses the reaction UMP + phosphate = alpha-D-ribose 1,5-bisphosphate + uracil. Its function is as follows. Catalyzes the conversion of AMP and phosphate to adenine and ribose 1,5-bisphosphate (R15P). Exhibits phosphorylase activity toward CMP and UMP in addition to AMP. Functions in an archaeal AMP degradation pathway, together with R15P isomerase and RubisCO. In Methanococcoides burtonii (strain DSM 6242 / NBRC 107633 / OCM 468 / ACE-M), this protein is AMP phosphorylase.